The sequence spans 1063 residues: Cellulose synthase A catalytic subunit 7 [UDP-forming] (1063 aa).

At 1–213 the chain is on the cytoplasmic side; that stretch reads MDTASVTGGE…IPSSKINPYR (213 aa). Zn(2+) contacts are provided by Cys18, Cys21, Cys37, Cys40, Cys45, Cys48, Cys60, and Cys63. Residues 18–64 form an RING-type; degenerate zinc finger; the sequence is CRVCGEEVAAREDGKPFVACAECGFPVCKPCYEYERSEGTQCCPQCN. Positions 116 to 154 are disordered; it reads NGEQPAQKWRPGGPALSSFTGSVAGKDLEQEREMEGGME. Basic and acidic residues predominate over residues 141–154; it reads KDLEQEREMEGGME. The chain crosses the membrane as a helical span at residues 214-234; it reads IVIVLRLVVLCFFLKFRITTP. Over 235-237 the chain is Extracellular; it reads AMD. The helical transmembrane segment at 238-258 threads the bilayer; that stretch reads AVPLWLASVICELWFALSWIL. The Cytoplasmic portion of the chain corresponds to 259–845; sequence DQLPKWSPVT…TNTIVYPFTS (587 aa). Residues Ser297, Lys303, Glu304, and Asp333 each coordinate UDP-alpha-D-glucose. Asp333 is an active-site residue. Positions 387-414 form a coiled coil; sequence VKERRAMKREYEEFKVRINALVAKAQKK. Lys474 lines the UDP-alpha-D-glucose pocket. Positions 475 and 499 each coordinate Mn(2+). Asp762 is a catalytic residue. Residues 846–866 traverse the membrane as a helical segment; sequence IPLLAYCTIPAVCLLTGKFII. The Extracellular segment spans residues 867 to 871; sequence PTLNN. The chain crosses the membrane as a helical span at residues 872–892; sequence LASIWFIALFLSIIATGVLEL. Residues 893-907 are Cytoplasmic-facing; sequence RWSGVSIEDWWRNEQ. The chain crosses the membrane as a helical span at residues 908-928; sequence FWVIGGVSAHLFAVFQGLLKV. The Extracellular segment spans residues 929–959; that stretch reads LGGVDTNFTVTSKAAADETDAFGELYLFKWT. Asn935 carries N-linked (GlcNAc...) asparagine glycosylation. A helical membrane pass occupies residues 960-980; the sequence is TLLVPPTTLIIINMVGIVAGV. Topologically, residues 981 to 991 are cytoplasmic; the sequence is SDAVNNGYGSW. A helical transmembrane segment spans residues 992–1012; the sequence is GPLFGKLFFSFWVILHLYPFL. At 1013–1021 the chain is on the extracellular side; it reads KGLMGRQNR. The helical transmembrane segment at 1022 to 1042 threads the bilayer; the sequence is TPTIVVLWSILLASIFSLVWV. The Cytoplasmic portion of the chain corresponds to 1043–1063; it reads RIDPFIPKPKGPVLKPCGVSC.

It belongs to the glycosyltransferase 2 family. Plant cellulose synthase subfamily. Requires Mn(2+) as cofactor. Zn(2+) is required as a cofactor.

It is found in the cell membrane. It carries out the reaction [(1-&gt;4)-beta-D-glucosyl](n) + UDP-alpha-D-glucose = [(1-&gt;4)-beta-D-glucosyl](n+1) + UDP + H(+). Its pathway is glycan metabolism; plant cellulose biosynthesis. Its function is as follows. Catalytic subunit of cellulose synthase terminal complexes ('rosettes'), required for beta-1,4-glucan microfibril crystallization, a major mechanism of the cell wall formation. Involved in the secondary cell wall formation. In Oryza sativa subsp. japonica (Rice), this protein is Cellulose synthase A catalytic subunit 7 [UDP-forming] (CESA7).